Reading from the N-terminus, the 265-residue chain is 5'-nucleotidase SurE (265 aa).

A divalent metal cation contacts are provided by Asp-8, Asp-9, Ser-39, and Asn-96.

It belongs to the SurE nucleotidase family. A divalent metal cation serves as cofactor.

It is found in the cytoplasm. It catalyses the reaction a ribonucleoside 5'-phosphate + H2O = a ribonucleoside + phosphate. Nucleotidase that shows phosphatase activity on nucleoside 5'-monophosphates. This is 5'-nucleotidase SurE from Rubrobacter xylanophilus (strain DSM 9941 / JCM 11954 / NBRC 16129 / PRD-1).